Here is a 232-residue protein sequence, read N- to C-terminus: tRNA (guanine-N(1)-)-methyltransferase (232 aa).

Residues glycine 112 and 132-137 (IGDYIL) contribute to the S-adenosyl-L-methionine site.

This sequence belongs to the RNA methyltransferase TrmD family. As to quaternary structure, homodimer.

It is found in the cytoplasm. The catalysed reaction is guanosine(37) in tRNA + S-adenosyl-L-methionine = N(1)-methylguanosine(37) in tRNA + S-adenosyl-L-homocysteine + H(+). Functionally, specifically methylates guanosine-37 in various tRNAs. The sequence is that of tRNA (guanine-N(1)-)-methyltransferase from Methylacidiphilum infernorum (isolate V4) (Methylokorus infernorum (strain V4)).